Consider the following 376-residue polypeptide: Glutamate 5-kinase (376 aa).

Position 15 (Lys15) interacts with ATP. Residues Ser56, Asp143, and Asn155 each contribute to the substrate site. 175-176 (SD) lines the ATP pocket. The region spanning 281 to 358 (KGTLTIDAGA…PDVMSILGVS (78 aa)) is the PUA domain.

This sequence belongs to the glutamate 5-kinase family.

It localises to the cytoplasm. It carries out the reaction L-glutamate + ATP = L-glutamyl 5-phosphate + ADP. The protein operates within amino-acid biosynthesis; L-proline biosynthesis; L-glutamate 5-semialdehyde from L-glutamate: step 1/2. Catalyzes the transfer of a phosphate group to glutamate to form L-glutamate 5-phosphate. This chain is Glutamate 5-kinase, found in Rhodopseudomonas palustris (strain HaA2).